A 2204-amino-acid chain; its full sequence is Non-reducing polyketide synthase CTB1 (2204 aa).

Residues 11 to 250 (AFGDQTYDCS…TRLPITAPYH (240 aa)) are N-terminal acylcarrier protein transacylase domain (SAT). The Ketosynthase family 3 (KS3) domain maps to 382 to 815 (KSPIAILAAS…GGNTCLVLED (434 aa)). Catalysis depends on for beta-ketoacyl synthase activity residues cysteine 554, histidine 689, and histidine 734. Positions 923-1224 (AFTGQGSAFE…QTFASINKDK (302 aa)) are malonyl-CoA:ACP transacylase (MAT) domain. Positions 1299-1619 (SSSIHKVITN…VPKRLMHYIV (321 aa)) are product template (PT) domain. The interval 1303–1439 (HKVITNTITA…CKIRFGSLEK (137 aa)) is N-terminal hotdog fold. Positions 1303–1616 (HKVITNTITA…LQGVPKRLMH (314 aa)) constitute a PKS/mFAS DH domain. The active-site Proton acceptor; for dehydratase activity is the histidine 1336. The C-terminal hotdog fold stretch occupies residues 1468–1616 (TYRFSKGMIY…LQGVPKRLMH (149 aa)). Aspartate 1528 serves as the catalytic Proton donor; for dehydratase activity. Positions 1625 to 1674 (KASGPPTEKKGSSPPVEKKASAPVAPTRPAIQRKNASIPPPATQVTPQNK) are disordered. Residues 1631–1644 (TEKKGSSPPVEKKA) show a composition bias toward basic and acidic residues. 2 consecutive Carrier domains span residues 1679–1756 (PSVS…TRLS) and 1783–1865 (DPSP…SGST). An O-(pantetheine 4'-phosphoryl)serine mark is found at serine 1716 and serine 1824. Residues 1864–1875 (STESFDSTTTKP) show a composition bias toward polar residues. Positions 1864–1931 (STESFDSTTT…PPKGRIPPAW (68 aa)) are disordered. The segment covering 1880-1895 (ATPPLTDSSASSPPSS) has biased composition (low complexity). A thioesterase (TE) domain region spans residues 1945–2195 (ILFLFPDGAG…SGAQMLVEHM (251 aa)).

Requires pantetheine 4'-phosphate as cofactor.

The catalysed reaction is 6 malonyl-CoA + acetyl-CoA + 6 H(+) = nor-toralactone + 6 CO2 + 7 CoA + 2 H2O. It functions in the pathway mycotoxin biosynthesis. In terms of biological role, polyketide synthase; part of the gene cluster that mediates the biosynthesis of cercosporin, a light-activated, non-host-selective toxin. The perylenequinone chromophore of cercosporin absorbs light energy to attain an electronically-activated triplet state and produces active oxygen species such as the hydroxyl radical, superoxide, hydrogen peroxide or singlet oxygen upon reaction with oxygen molecules. These reactive oxygen species cause damage to various cellular components including lipids, proteins and nucleic acids. The first step of cercosporin biosynthesis is performed by the polyketide synthase CTB1 which catalyzes the formation of nor-toralactone. The starter unit acyltransferase (SAT) domain of CTB1 initiates polyketide extension by the selective utilization of acetyl-CoA, which is elongated to the heptaketide in the beta-ketoacyl synthase (KS) domain by successive condensations with six malonyl units introduced by the malonyl acyltransferase (MAT) domain. The product template (PT) domain catalyzes C4-C9 and C2-C11 aldol cyclizations and dehydrations to a trihydroxynaphthalene, which is thought to be delivered to the thioesterase (TE) domain for product release. The bifunctional enzyme CTB3 then methylates nor-toralactone to toralactone before conducting an unusual oxidative aromatic ring opening. The O-methyltransferase CTB2 further methylates the nascent OH-6 of the CBT3 product, blocking further oxidation at this site before the reductase CTB6 reduces the 2-oxopropyl ketone at position C7, giving naphthalene. The FAD-dependent monooxygenase CTB5 in concert with the multicopper oxidase CTB12 are responsible for homodimerization of naphthalene with CTB7 installing the dioxepine moiety, finally producing cercosporin. The fasciclin domain-containing protein CTB11 might act with CTB5 and CTB12 whereas the roles of CTB9 and CTB10 have still to be elucidated. This chain is Non-reducing polyketide synthase CTB1, found in Cercospora beticola (Sugarbeet leaf spot fungus).